A 941-amino-acid polypeptide reads, in one-letter code: Protein translocase subunit SecA (941 aa).

ATP contacts are provided by residues Q87, 105–109 (GEGKT), and D524. Positions 871-919 (DEQPPMPAMEAHKLDPNTGEDQVAQAQSGLAPVAPAKRDPANPATWGKV) are disordered. Residues C925, C927, C936, and H937 each contribute to the Zn(2+) site.

The protein belongs to the SecA family. As to quaternary structure, monomer and homodimer. Part of the essential Sec protein translocation apparatus which comprises SecA, SecYEG and auxiliary proteins SecDF-YajC and YidC. Zn(2+) serves as cofactor.

The protein resides in the cell inner membrane. It is found in the cytoplasm. The catalysed reaction is ATP + H2O + cellular proteinSide 1 = ADP + phosphate + cellular proteinSide 2.. Part of the Sec protein translocase complex. Interacts with the SecYEG preprotein conducting channel. Has a central role in coupling the hydrolysis of ATP to the transfer of proteins into and across the cell membrane, serving both as a receptor for the preprotein-SecB complex and as an ATP-driven molecular motor driving the stepwise translocation of polypeptide chains across the membrane. The sequence is that of Protein translocase subunit SecA from Afipia carboxidovorans (strain ATCC 49405 / DSM 1227 / KCTC 32145 / OM5) (Oligotropha carboxidovorans).